The primary structure comprises 326 residues: tRNA uridine(34) hydroxylase (326 aa).

A Rhodanese domain is found at 123–217 (SDPDVLLVDT…YLEEVKQEES (95 aa)). Residue Cys177 is the Cysteine persulfide intermediate of the active site. The disordered stretch occupies residues 304–326 (VSQVILSRRTEKEDQRQAQNKKA).

The protein belongs to the TrhO family.

It catalyses the reaction uridine(34) in tRNA + AH2 + O2 = 5-hydroxyuridine(34) in tRNA + A + H2O. Its function is as follows. Catalyzes oxygen-dependent 5-hydroxyuridine (ho5U) modification at position 34 in tRNAs. The polypeptide is tRNA uridine(34) hydroxylase (Shewanella sediminis (strain HAW-EB3)).